We begin with the raw amino-acid sequence, 380 residues long: Phospho-N-acetylmuramoyl-pentapeptide-transferase (380 aa).

The next 11 helical transmembrane spans lie at 26–46, 75–95, 98–118, 135–155, 160–180, 183–203, 222–242, 259–279, 283–303, 311–331, and 357–377; these read IVAA…LFIE, MGGA…ADLG, LVWA…WDDW, LVLQ…DWQP, GFPF…PFVP, LFSP…VVAT, IVSS…IAGF, LGVF…YNTY, VFMG…LAVL, AILH…VWSF, and KIIV…LMSL.

Belongs to the glycosyltransferase 4 family. MraY subfamily. It depends on Mg(2+) as a cofactor.

Its subcellular location is the cell inner membrane. The catalysed reaction is UDP-N-acetyl-alpha-D-muramoyl-L-alanyl-gamma-D-glutamyl-meso-2,6-diaminopimeloyl-D-alanyl-D-alanine + di-trans,octa-cis-undecaprenyl phosphate = di-trans,octa-cis-undecaprenyl diphospho-N-acetyl-alpha-D-muramoyl-L-alanyl-D-glutamyl-meso-2,6-diaminopimeloyl-D-alanyl-D-alanine + UMP. The protein operates within cell wall biogenesis; peptidoglycan biosynthesis. Functionally, catalyzes the initial step of the lipid cycle reactions in the biosynthesis of the cell wall peptidoglycan: transfers peptidoglycan precursor phospho-MurNAc-pentapeptide from UDP-MurNAc-pentapeptide onto the lipid carrier undecaprenyl phosphate, yielding undecaprenyl-pyrophosphoryl-MurNAc-pentapeptide, known as lipid I. This Anaeromyxobacter sp. (strain Fw109-5) protein is Phospho-N-acetylmuramoyl-pentapeptide-transferase.